Consider the following 96-residue polypeptide: Neurotoxin 23 (96 aa).

An N-terminal signal peptide occupies residues 1-22; it reads MKNIVIIITVAVLFNLFGESLQ. Residues 26 to 89 form the LCN-type CS-alpha/beta domain; it reads FETYPLNQDD…FLAEIIDTCN (64 aa). 3 cysteine pairs are disulfide-bonded: cysteine 40-cysteine 63, cysteine 49-cysteine 68, and cysteine 53-cysteine 70.

It belongs to the long (3 C-C) scorpion toxin superfamily. Expressed by the venom gland.

The protein resides in the secreted. This is Neurotoxin 23 from Lychas mucronatus (Chinese swimming scorpion).